The primary structure comprises 398 residues: NADH-ubiquinone oxidoreductase 49 kDa subunit (398 aa).

It belongs to the complex I 49 kDa subunit family.

It localises to the mitochondrion. It catalyses the reaction a ubiquinone + NADH + 5 H(+)(in) = a ubiquinol + NAD(+) + 4 H(+)(out). In terms of biological role, core subunit of the mitochondrial membrane respiratory chain NADH dehydrogenase (Complex I) that is believed to belong to the minimal assembly required for catalysis. Complex I functions in the transfer of electrons from NADH to the respiratory chain. The immediate electron acceptor for the enzyme is believed to be ubiquinone. Component of the iron-sulfur (IP) fragment of the enzyme. Component of the iron-sulfur (IP) fragment of the enzyme. The chain is NADH-ubiquinone oxidoreductase 49 kDa subunit (NAD7) from Cafeteria roenbergensis (Marine flagellate).